Reading from the N-terminus, the 214-residue chain is Dephospho-CoA kinase (214 aa).

Positions 4-204 (IVGLTGGIGS…QRYLQLAQQK (201 aa)) constitute a DPCK domain. Residue 12-17 (GSGKST) coordinates ATP.

The protein belongs to the CoaE family.

The protein resides in the cytoplasm. It catalyses the reaction 3'-dephospho-CoA + ATP = ADP + CoA + H(+). Its pathway is cofactor biosynthesis; coenzyme A biosynthesis; CoA from (R)-pantothenate: step 5/5. In terms of biological role, catalyzes the phosphorylation of the 3'-hydroxyl group of dephosphocoenzyme A to form coenzyme A. This chain is Dephospho-CoA kinase, found in Mannheimia succiniciproducens (strain KCTC 0769BP / MBEL55E).